Here is a 303-residue protein sequence, read N- to C-terminus: Cilia- and flagella-associated protein 161 (303 aa).

Microtubule inner protein component of sperm flagellar doublet microtubules.

The protein localises to the cytoplasm. It is found in the cytoskeleton. Its subcellular location is the cilium axoneme. The protein resides in the flagellum axoneme. Functionally, microtubule inner protein (MIP) part of the dynein-decorated doublet microtubules (DMTs) in cilia axoneme, which is required for motile cilia beating. This is Cilia- and flagella-associated protein 161 from Mus musculus (Mouse).